Here is a 175-residue protein sequence, read N- to C-terminus: MSAGGAVPPPPNPAVSFPAPRVTLPAGPDILRTYSGAFVCLEIVLGGLVWILVASSNVPLPLLQGWVMFVSVTAFFFSLLFLGLFLSGMVTQIDANWNFLDFVYHFIVFVFYFGAFLLEAAATSLHDLQCNTTMTVKPLLNDNQYNINVAATVFAFMTTACYGCSLGLALRRWRP.

Topologically, residues 1–33 are cytoplasmic; the sequence is MSAGGAVPPPPNPAVSFPAPRVTLPAGPDILRT. One can recognise an MARVEL domain in the interval 30–174; it reads ILRTYSGAFV…SLGLALRRWR (145 aa). A helical transmembrane segment spans residues 34–54; that stretch reads YSGAFVCLEIVLGGLVWILVA. The Lumenal segment spans residues 55–65; it reads SSNVPLPLLQG. A helical membrane pass occupies residues 66-86; sequence WVMFVSVTAFFFSLLFLGLFL. Residues 87–101 lie on the Cytoplasmic side of the membrane; that stretch reads SGMVTQIDANWNFLD. A helical membrane pass occupies residues 102–122; that stretch reads FVYHFIVFVFYFGAFLLEAAA. Residues 123 to 148 lie on the Lumenal side of the membrane; the sequence is TSLHDLQCNTTMTVKPLLNDNQYNIN. N-linked (GlcNAc...) asparagine glycosylation occurs at Asn-131. Residues 149 to 169 form a helical membrane-spanning segment; sequence VAATVFAFMTTACYGCSLGLA. Over 170-175 the chain is Cytoplasmic; that stretch reads LRRWRP.

It belongs to the MAL family. Interacts with TPD52L2.

It localises to the cell membrane. The protein localises to the apical cell membrane. In terms of biological role, member of the machinery of polarized transport. Required for the indirect transcytotic route at the step of the egress of the transcytosing cargo from perinuclear endosomes in order for it to travel to the apical surface via a raft-dependent pathway. In Mus musculus (Mouse), this protein is Protein MAL2 (Mal2).